The chain runs to 493 residues: WAS/WASL-interacting protein family member 1 (493 aa).

Pro residues predominate over residues 1-14; that stretch reads MPVPPPPAPPPPPT. The tract at residues 1 to 493 is disordered; that stretch reads MPVPPPPAPP…GAPPLPPIPR (493 aa). Polar residues predominate over residues 21–31; the sequence is EKPTLNKTEQA. In terms of domain architecture, WH2 spans 32–49; that stretch reads GRNALLSDISKGKKLKKT. An Asymmetric dimethylarginine modification is found at arginine 33. Residues 45–48 are binds actin; sequence KLKK. A compositionally biased stretch (gly residues) spans 67 to 105; it reads ASAGGYGGGGGGGGGGGGGGGGSGGNFGGGGPPGLGGLF. 2 positions are modified to omega-N-methylarginine: arginine 126 and arginine 135. Composition is skewed to pro residues over residues 142 to 155, 162 to 175, and 183 to 195; these read FSPP…PAPS, PPEP…PPRP, and SLPP…PRPV. Serine 143 is modified (phosphoserine). Serine 227 is subject to Phosphoserine. Pro residues-rich tracts occupy residues 239 to 248, 274 to 290, and 298 to 315; these read FPRPPLPPTP, VPPP…PSTP, and APPP…PLPP. 2 positions are modified to phosphoserine: serine 330 and serine 340. Pro residues predominate over residues 336 to 361; that stretch reads PPLPSPGRSGPLPPPPSERPPPPVRD. 3 XRSGPXPPXP motif repeats span residues 342 to 351, 364 to 373, and 400 to 409; these read GRSGPLPPPP and PRSGPRPPLP. The segment covering 403–424 has biased composition (pro residues); sequence GPRPPLPPDRPGAGAPPPPPPS. Residues 425–434 show a composition bias toward polar residues; that stretch reads TSVRNGFQDS. The segment covering 470 to 484 has biased composition (basic and acidic residues); the sequence is ARNESRSGSNRRERG.

This sequence belongs to the verprolin family. In terms of assembly, binds to WAS within the N-terminal region, at a site distinct from the CDC42-binding site. Binds profilin and actin. Binds to WASL. Interacts with DBNL. Interacts with DBNL. Interacts with FNBP1L (via the SH3 domain).

It localises to the cytoplasmic vesicle. The protein resides in the cytoplasm. Its subcellular location is the cytoskeleton. It is found in the cell projection. The protein localises to the ruffle. Its function is as follows. Plays a role in the reorganization of the actin cytoskeleton. Contributes with NCK1 and GRB2 in the recruitment and activation of WASL. May participate in regulating the subcellular localization of WASL, resulting in the disassembly of stress fibers in favor of filopodia formation. Plays a role in the formation of cell ruffles. The chain is WAS/WASL-interacting protein family member 1 (Wipf1) from Mus musculus (Mouse).